Reading from the N-terminus, the 118-residue chain is Putative pterin-4-alpha-carbinolamine dehydratase (118 aa).

Belongs to the pterin-4-alpha-carbinolamine dehydratase family.

The enzyme catalyses (4aS,6R)-4a-hydroxy-L-erythro-5,6,7,8-tetrahydrobiopterin = (6R)-L-erythro-6,7-dihydrobiopterin + H2O. This chain is Putative pterin-4-alpha-carbinolamine dehydratase, found in Pseudomonas savastanoi pv. phaseolicola (strain 1448A / Race 6) (Pseudomonas syringae pv. phaseolicola (strain 1448A / Race 6)).